Here is a 432-residue protein sequence, read N- to C-terminus: UPF0597 protein APJL_1638 (432 aa).

This sequence belongs to the UPF0597 family.

This chain is UPF0597 protein APJL_1638, found in Actinobacillus pleuropneumoniae serotype 3 (strain JL03).